An 875-amino-acid chain; its full sequence is Alanine--tRNA ligase (875 aa).

Zn(2+) is bound by residues His-564, His-568, Cys-666, and His-670.

It belongs to the class-II aminoacyl-tRNA synthetase family. In terms of assembly, homotetramer. The cofactor is Zn(2+).

The protein localises to the cytoplasm. It catalyses the reaction tRNA(Ala) + L-alanine + ATP = L-alanyl-tRNA(Ala) + AMP + diphosphate. In terms of biological role, catalyzes the attachment of alanine to tRNA(Ala) in a two-step reaction: alanine is first activated by ATP to form Ala-AMP and then transferred to the acceptor end of tRNA(Ala). Also edits incorrectly charged Ser-tRNA(Ala) and Gly-tRNA(Ala) via its editing domain. The sequence is that of Alanine--tRNA ligase from Yersinia pseudotuberculosis serotype IB (strain PB1/+).